The sequence spans 294 residues: Ribosomal RNA small subunit methyltransferase H (294 aa).

S-adenosyl-L-methionine is bound by residues G37 to H39, D58, L93, D105, and Q112.

It belongs to the methyltransferase superfamily. RsmH family.

It is found in the cytoplasm. It carries out the reaction cytidine(1402) in 16S rRNA + S-adenosyl-L-methionine = N(4)-methylcytidine(1402) in 16S rRNA + S-adenosyl-L-homocysteine + H(+). In terms of biological role, specifically methylates the N4 position of cytidine in position 1402 (C1402) of 16S rRNA. This chain is Ribosomal RNA small subunit methyltransferase H, found in Fervidobacterium nodosum (strain ATCC 35602 / DSM 5306 / Rt17-B1).